The primary structure comprises 55 residues: Protein CADMIUM TOLERANCE 1 (55 aa).

A helical membrane pass occupies residues 24-40 (GCLYACIFTALCCFCCY).

The protein belongs to the CYSTM1 family. As to expression, expressed in roots and shoots.

Its subcellular location is the cell membrane. It localises to the secreted. It is found in the cell wall. In terms of biological role, confers resistance to heavy metal ions (e.g. cadmium (CdCl(2)) and copper (CuCl(2))) by chelating them at the plasma membrane of root cells, thus stopping their entry and reducing their accumulation. Binds to aluminium (Al). In Oryza sativa subsp. japonica (Rice), this protein is Protein CADMIUM TOLERANCE 1.